The chain runs to 155 residues: Mediator of RNA polymerase II transcription subunit 21 (155 aa).

The disordered stretch occupies residues Gln-29–Ser-73. The segment covering His-39–Ala-51 has biased composition (basic and acidic residues). Positions Ser-58–Pro-69 are enriched in pro residues. Residues Glu-75–Lys-147 adopt a coiled-coil conformation.

This sequence belongs to the Mediator complex subunit 21 family. In terms of assembly, component of the Mediator complex.

The protein resides in the nucleus. Its function is as follows. Component of the Mediator complex, a coactivator involved in the regulated transcription of nearly all RNA polymerase II-dependent genes. Mediator functions as a bridge to convey information from gene-specific regulatory proteins to the basal RNA polymerase II transcription machinery. Mediator is recruited to promoters by direct interactions with regulatory proteins and serves as a scaffold for the assembly of a functional preinitiation complex with RNA polymerase II and the general transcription factors. The sequence is that of Mediator of RNA polymerase II transcription subunit 21 (SRB7) from Phaeosphaeria nodorum (strain SN15 / ATCC MYA-4574 / FGSC 10173) (Glume blotch fungus).